A 240-amino-acid polypeptide reads, in one-letter code: Ubiquinone biosynthesis O-methyltransferase (240 aa).

S-adenosyl-L-methionine contacts are provided by Arg44, Gly64, Asp85, and Met129.

Belongs to the methyltransferase superfamily. UbiG/COQ3 family.

The catalysed reaction is a 3-demethylubiquinol + S-adenosyl-L-methionine = a ubiquinol + S-adenosyl-L-homocysteine + H(+). It catalyses the reaction a 3-(all-trans-polyprenyl)benzene-1,2-diol + S-adenosyl-L-methionine = a 2-methoxy-6-(all-trans-polyprenyl)phenol + S-adenosyl-L-homocysteine + H(+). Its pathway is cofactor biosynthesis; ubiquinone biosynthesis. Its function is as follows. O-methyltransferase that catalyzes the 2 O-methylation steps in the ubiquinone biosynthetic pathway. The chain is Ubiquinone biosynthesis O-methyltransferase from Escherichia coli (strain UTI89 / UPEC).